Consider the following 325-residue polypeptide: Porphobilinogen deaminase (325 aa).

C253 carries the S-(dipyrrolylmethanemethyl)cysteine modification.

This sequence belongs to the HMBS family. Dipyrromethane serves as cofactor.

The enzyme catalyses 4 porphobilinogen + H2O = hydroxymethylbilane + 4 NH4(+). It participates in porphyrin-containing compound metabolism; protoporphyrin-IX biosynthesis; coproporphyrinogen-III from 5-aminolevulinate: step 2/4. Tetrapolymerization of the monopyrrole PBG into the hydroxymethylbilane pre-uroporphyrinogen in several discrete steps. This chain is Porphobilinogen deaminase (hemC), found in Dictyostelium discoideum (Social amoeba).